The chain runs to 641 residues: Raffinose carrier protein (641 aa).

Positions 1–506 (MQEEHNYKWV…GQVIPLAQVN (506 aa)) are permease. 12 helical membrane passes run 25-45 (AFYS…LFDT), 57-77 (LVTL…PFIG), 93-113 (WVVV…TNLG), 120-140 (AMIY…FYSF), 168-188 (LGST…VIFF), 201-221 (WFIF…GVGL), 253-273 (LLWA…LGSL), 288-308 (FSIL…LFPV), 317-337 (GVFA…TIAG), 342-362 (LVLL…LVVL), 394-414 (FGGA…GMTT), and 429-449 (FKLT…GIFS). One can recognise a PTS EIIA type-1 domain in the interval 507 to 611 (DPTFAAGTLG…DDTVIMTVTN (105 aa)). His559 carries the phosphohistidine; by HPr modification.

This sequence in the N-terminal section; belongs to the sodium:galactoside symporter (TC 2.A.2) family.

It localises to the cell membrane. The chain is Raffinose carrier protein (rafP) from Pediococcus pentosaceus.